The following is a 359-amino-acid chain: Putative nucleotidyltransferase MAB21L1 (359 aa).

A ribonucleoside 5'-triphosphate is bound by residues Arg23–Lys24 and Phe63–Leu66. Mg(2+)-binding residues include Glu73 and Glu75. Residues Lys248 and Ser252–Lys255 contribute to the a ribonucleoside 5'-triphosphate site.

The protein belongs to the mab-21 family. As to quaternary structure, monomer. Homodecamer; composed of 2 back to back homopentamers. The protein may exist as monomer in solution and oiligomerizes upon ligand binding.

It localises to the nucleus. In terms of biological role, putative nucleotidyltransferase required for several aspects of embryonic development including normal development of the eye. It is unclear whether it displays nucleotidyltransferase activity in vivo. Binds single-stranded RNA (ssRNA). The protein is Putative nucleotidyltransferase MAB21L1 (mab21l1) of Danio rerio (Zebrafish).